Here is a 383-residue protein sequence, read N- to C-terminus: Deoxyguanosinetriphosphate triphosphohydrolase-like protein (383 aa).

Residues Arg-62–Ile-198 form the HD domain.

This sequence belongs to the dGTPase family. Type 2 subfamily.

In Rickettsia bellii (strain RML369-C), this protein is Deoxyguanosinetriphosphate triphosphohydrolase-like protein.